A 1029-amino-acid polypeptide reads, in one-letter code: DNA repair protein RAD5A (1029 aa).

A disordered region spans residues 83-104 (SVGANHRVEEENESVNGGGEES). Positions 406 to 622 (PSTLQMARGG…YSLLRFLRIE (217 aa)) constitute a Helicase ATP-binding domain. ATP is bound at residue 419–426 (DAMGLGKT). The short motif at 573 to 576 (DEAH) is the DEAH box element. The segment at 794 to 834 (CPICLEALEDAVLTPCAHRLCRECLLASWRNSTSGLCPVCR) adopts an RING-type zinc-finger fold. The Helicase C-terminal domain occupies 864–1029 (KITALLEELE…RIEELKMLFT (166 aa)).

The protein belongs to the SNF2/RAD54 helicase family. RAD16 subfamily.

Its subcellular location is the nucleus. In terms of biological role, functions in error-free postreplication DNA repair or DNA-damage tolerance (DTT) pathway. Required for homologous recombination (HR) induced by DNA double-strand break (DSB) in somatic cells. Required for damage-induced DNA repair, independently of MUS81 and RECQL4A. Plays a role in synthesis-dependent strand annealing (SDSA) but not in single-strand annealing (SSA). Possesses double-stranded DNA-dependent ATPase activity. Is able to regress replication forks with preference for forks with a leading strand gap. Is able to catalyze branch migration of Holliday junctions and is unaffected by protein blockades. This Arabidopsis thaliana (Mouse-ear cress) protein is DNA repair protein RAD5A.